A 403-amino-acid polypeptide reads, in one-letter code: Tyrosine--tRNA ligase (403 aa).

Residues 42–51 (PTAPDLHLGH) carry the 'HIGH' region motif. A 'KMSKS' region motif is present at residues 226–230 (KMSKS). Lysine 229 serves as a coordination point for ATP. Residues 336–396 (MPISAVLNKA…GKKAFGRVTL (61 aa)) form the S4 RNA-binding domain.

This sequence belongs to the class-I aminoacyl-tRNA synthetase family. TyrS type 2 subfamily. In terms of assembly, homodimer.

Its subcellular location is the cytoplasm. The catalysed reaction is tRNA(Tyr) + L-tyrosine + ATP = L-tyrosyl-tRNA(Tyr) + AMP + diphosphate + H(+). In terms of biological role, catalyzes the attachment of tyrosine to tRNA(Tyr) in a two-step reaction: tyrosine is first activated by ATP to form Tyr-AMP and then transferred to the acceptor end of tRNA(Tyr). This Pseudomonas savastanoi pv. phaseolicola (strain 1448A / Race 6) (Pseudomonas syringae pv. phaseolicola (strain 1448A / Race 6)) protein is Tyrosine--tRNA ligase.